A 1322-amino-acid polypeptide reads, in one-letter code: MIVLKGASALSPFRLARFESRLQTTVPELRIVGAWHCYLIQIKSGHTLDMSALHRILQAESVSELPQKHVVSRYVMPRLGTHSPWSSKTTELLHGADQPIARIERGTRIDLLGWSANAATCPAIAKQLYDPMTQSLLESEDEVKTLFNVPEPRPLERIALIDLEHANTRLGLALTADEIDYLRTRYTELNRVPSDVELMMFAQANSEHCRHKIFNATWTIDDKEQPYSLFQMIKHTHQHTPQYTLSAYADNAAVIEGHPTTRYRPDPITGEYRHEAVLPGAFQIKVETHNHPTAIAPFPGASTGAGGEIRDEGATGRGGKPKAGLSGFSVSHLRIPTLPHPWETPRALNPRMASALDIMLEGPLGSAAFNNEFGRPNLLGYFRSFELSASKTLTRAYDKPIMLAGGLGAIDRIHIKKLRLQPGDVIIVLGGPAMLIGLGGGAASSVTSGTSTEALDFASVQRDNPEMQRRCQEVIDHCVALGTNNPIRSFHDVGAGGLSNAIPELLHDSEVGGVIDLAKIPSDDPSLSPLELWCNESQERYVLGISAPHLQAFAAICSRERCPFAAVGVATATEQLIVGYGVTLPAALHVTEQQTPQRANRTETSPTPNTLVSPVREAFAIDLPMDVLFGKAPKMHRNTAHPPPPQWPTLDSTQLDLHHAGLRVLAHPTVAAKNFLVTIGDRSIGGLTAREQMIGPWQLPLADCAITLAGFSSYAGEAFAIGERAPLALLNSAAAARMAVGEAITNLCAAPVESLSMVKLSANWMAAAEYPGEDALLYDAVKAIGIELCPALDISIPVGKDSLSMQSRWQGDGATHTCISPVSLVISAFTPVADARRQLTPLLHHQTNSELWLIALDGGKQRLGGSVLAQVHADSAALPAFGGECPDLDTPETLRAFFALMNDARNAGLLLAYHDRSDGGAFAALCEMAFASHLGLDITCDNRTEHLFPHLFNEELGAIVQVADEHRTAFADLVEHHGLTAYTQRIAHPTTAPSIRVMHNDQCLAQWTWETLFDAWWSVTHAIQRLRDNPECADEEREIARTFTAPGLKPTLSFDPAADVAMPFISTGIRPKVAILREQGINGHIEMALCFERAGFHSVDIHMNDLITGRVHLDEFVGLAACGGFSYGDVLGAGRGWATSILERTALRDQFAAFFTRTDRFALGVCNGCQMLSQLKSMIPGAEHWPRFVRNRSEQFEARTALLEVIQSPSIFLSGMAGSRLPVAVAHGEGYAMFDTPADQAAAHVALRYINGHGQAATHYPLNPNGSPNGITGLTTTDGRITILMPHPERTPRTINLSWCPNEWGEDAPWLRLFRNARAWVG.

Residues 300–311 (GASTGAGGEIRD) and Ala702 contribute to the ATP site. Asp703, Glu742, Asn746, and Asp915 together coordinate Mg(2+). Ser917 is an ATP binding site. The Glutamine amidotransferase type-1 domain occupies 1073–1322 (VAILREQGIN…LFRNARAWVG (250 aa)). The Nucleophile role is filled by Cys1166. Catalysis depends on residues His1287 and Glu1289.

The protein in the N-terminal section; belongs to the FGAMS family. In terms of assembly, monomer.

It localises to the cytoplasm. The catalysed reaction is N(2)-formyl-N(1)-(5-phospho-beta-D-ribosyl)glycinamide + L-glutamine + ATP + H2O = 2-formamido-N(1)-(5-O-phospho-beta-D-ribosyl)acetamidine + L-glutamate + ADP + phosphate + H(+). The protein operates within purine metabolism; IMP biosynthesis via de novo pathway; 5-amino-1-(5-phospho-D-ribosyl)imidazole from N(2)-formyl-N(1)-(5-phospho-D-ribosyl)glycinamide: step 1/2. In terms of biological role, phosphoribosylformylglycinamidine synthase involved in the purines biosynthetic pathway. Catalyzes the ATP-dependent conversion of formylglycinamide ribonucleotide (FGAR) and glutamine to yield formylglycinamidine ribonucleotide (FGAM) and glutamate. The protein is Phosphoribosylformylglycinamidine synthase of Xylella fastidiosa (strain Temecula1 / ATCC 700964).